The sequence spans 282 residues: Large ribosomal subunit protein uL2c (282 aa).

The interval 230-261 is disordered; it reads SAQNAVDHPHGGGEGKAPIGRIPSTPWGKPAL.

It belongs to the universal ribosomal protein uL2 family. As to quaternary structure, part of the 50S ribosomal subunit.

Its subcellular location is the plastid. This Helicosporidium sp. subsp. Simulium jonesii (Green alga) protein is Large ribosomal subunit protein uL2c (rpl2).